Consider the following 205-residue polypeptide: N-(5'-phosphoribosyl)anthranilate isomerase (205 aa).

The protein belongs to the TrpF family.

It catalyses the reaction N-(5-phospho-beta-D-ribosyl)anthranilate = 1-(2-carboxyphenylamino)-1-deoxy-D-ribulose 5-phosphate. The protein operates within amino-acid biosynthesis; L-tryptophan biosynthesis; L-tryptophan from chorismate: step 3/5. This Thermotoga neapolitana (strain ATCC 49049 / DSM 4359 / NBRC 107923 / NS-E) protein is N-(5'-phosphoribosyl)anthranilate isomerase.